We begin with the raw amino-acid sequence, 124 residues long: Small ribosomal subunit protein bS6 (124 aa).

The disordered stretch occupies residues 96 to 124 (ETGPSPMMKEVQREEAKKAAAAQPTEAQA). The segment covering 114–124 (AAAAQPTEAQA) has biased composition (low complexity).

This sequence belongs to the bacterial ribosomal protein bS6 family.

Binds together with bS18 to 16S ribosomal RNA. The polypeptide is Small ribosomal subunit protein bS6 (Burkholderia mallei (strain ATCC 23344)).